The following is a 370-amino-acid chain: Peptidyl-prolyl cis-trans isomerase D (370 aa).

Positions 11 to 176 constitute a PPIase cyclophilin-type domain; the sequence is FFDISADGKP…EDWIISDCGE (166 aa). TPR repeat units lie at residues 218–251, 269–302, and 307–340; these read VTTL…LNDY, LSCY…EAID, and TKAL…SPED.

It belongs to the cyclophilin-type PPIase family. PPIase D subfamily.

The protein resides in the cytoplasm. The catalysed reaction is [protein]-peptidylproline (omega=180) = [protein]-peptidylproline (omega=0). In terms of biological role, PPIases accelerate the folding of proteins. It catalyzes the cis-trans isomerization of proline imidic peptide bonds in oligopeptides. The polypeptide is Peptidyl-prolyl cis-trans isomerase D (CPR6) (Debaryomyces hansenii (strain ATCC 36239 / CBS 767 / BCRC 21394 / JCM 1990 / NBRC 0083 / IGC 2968) (Yeast)).